The primary structure comprises 423 residues: WD repeat and SOCS box-containing protein 1 (423 aa).

Positions 76–100 (DRSSGAGPRRLSRQNSEGSLLPGEP) are disordered. WD repeat units follow at residues 125-166 (SRCV…LLLN), 169-209 (DHTD…NMVK), 213-252 (GHQNWVYCSAFSPDSSVLCSVGAGKAVFLWDMDKYTLIRK), 255-294 (GHHNDVVCCEFSPDGALLATASYDTRVIVWDPHTATVLLE), and 310-347 (ANDRWVRSVAFCHDGRHIASVTDDRLVRFWSIDEKSPQ). The SOCS box domain maps to 373–423 (DGSVHFWASPRSIASLQHLCRMTLRRVMPTQQVYTLPIPFSMQDYLAYKTL).

As to quaternary structure, component of a probable ECS E3 ubiquitin-protein ligase complex that contains the Elongin BC complex.

The protein operates within protein modification; protein ubiquitination. Probable substrate-recognition component of a SCF-like ECS (Elongin-Cullin-SOCS-box protein) E3 ubiquitin-protein ligase complex which mediates the ubiquitination and subsequent proteasomal degradation of target proteins. The protein is WD repeat and SOCS box-containing protein 1 (wsb1) of Danio rerio (Zebrafish).